A 209-amino-acid chain; its full sequence is Transmembrane domain-containing protein TMIGD3 (209 aa).

Positions 1–15 (MEFLLLLSLALFSDA) are cleaved as a signal peptide. A helical membrane pass occupies residues 152–172 (SILIICILITSLGIIFIISHL). A disordered region spans residues 179–201 (QRNREVTGKSISRNPQASQGPSM). Positions 187–201 (KSISRNPQASQGPSM) are enriched in polar residues.

The protein resides in the membrane. This is Transmembrane domain-containing protein TMIGD3 (Tmigd3) from Mus musculus (Mouse).